The primary structure comprises 627 residues: Zinc finger protein 256 (627 aa).

The 83-residue stretch at 14-96 folds into the KRAB domain; sequence VTFEDVAVYF…QKTNPCEICG (83 aa). Residues 55–76 form a disordered region; it reads GSGAGDEEAPYQQSTSPQRVSQ. Residues 65–75 show a composition bias toward polar residues; the sequence is YQQSTSPQRVS. 15 consecutive C2H2-type zinc fingers follow at residues 90–112, 239–261, 267–289, 295–317, 323–345, 351–373, 379–401, 407–429, 435–457, 463–485, 491–513, 519–541, 547–569, 575–597, and 603–625; these read NPCE…QGTH, YMCS…LRVH, YTCG…RRIH, HQCD…QRVH, YKCS…QRIH, YECS…QRVH, YMCS…RRLH, HECH…ERVH, YECS…WKVH, YECG…QRVH, YECN…RRSH, YECS…RRVH, YECS…QRIH, and YECS…QNVH.

It belongs to the krueppel C2H2-type zinc-finger protein family. Interacts with TRIM28.

The protein localises to the nucleus. Transcriptional repressor that plays a role in cell proliferation. Requires TRIM28 for its activity. This Homo sapiens (Human) protein is Zinc finger protein 256 (ZNF256).